The following is a 259-amino-acid chain: Probable ABC transporter arginine-binding protein ArtJ (259 aa).

The signal sequence occupies residues 1–25 (MIKQIGRFFRAFIFIMPLSLTSCES). Positions 38, 45, 96, 97, 99, 104, and 149 each coordinate L-arginine.

The protein belongs to the bacterial solute-binding protein 3 family.

The protein resides in the secreted. It is found in the cell surface. Probably part of an ABC transporter complex involved in arginine transport. Binds arginine. Interacts with host epithelial cells, suggesting a role in host-cell adhesion during infection. In Chlamydia pneumoniae (Chlamydophila pneumoniae), this protein is Probable ABC transporter arginine-binding protein ArtJ.